Reading from the N-terminus, the 177-residue chain is ATP synthase subunit delta (177 aa).

This sequence belongs to the ATPase delta chain family. In terms of assembly, F-type ATPases have 2 components, F(1) - the catalytic core - and F(0) - the membrane proton channel. F(1) has five subunits: alpha(3), beta(3), gamma(1), delta(1), epsilon(1). F(0) has three main subunits: a(1), b(2) and c(10-14). The alpha and beta chains form an alternating ring which encloses part of the gamma chain. F(1) is attached to F(0) by a central stalk formed by the gamma and epsilon chains, while a peripheral stalk is formed by the delta and b chains.

The protein localises to the cell inner membrane. F(1)F(0) ATP synthase produces ATP from ADP in the presence of a proton or sodium gradient. F-type ATPases consist of two structural domains, F(1) containing the extramembraneous catalytic core and F(0) containing the membrane proton channel, linked together by a central stalk and a peripheral stalk. During catalysis, ATP synthesis in the catalytic domain of F(1) is coupled via a rotary mechanism of the central stalk subunits to proton translocation. Functionally, this protein is part of the stalk that links CF(0) to CF(1). It either transmits conformational changes from CF(0) to CF(1) or is implicated in proton conduction. In Aliivibrio fischeri (strain ATCC 700601 / ES114) (Vibrio fischeri), this protein is ATP synthase subunit delta.